Here is a 1379-residue protein sequence, read N- to C-terminus: MAERINLVFHNKVLDGTAMKRLISRLIDHFGMAYTSHILDQVKTLGFQQATATSISLGIDDLLTIPSKGWLVQDAEQQSFVFEKYQHSGNVHAVEKLRQSIEIWYATSEYLRQEMHLNFRMTDPLNPVHIMSFSGARGNASQVHQLVGMRGLMSDPQGQMIDLPIQSNLREGLSLTEYIISCYGARKGVVDTAVRTSDAGYLTRRLVEVVQHIVVRRADCGTARGISVSPHNGMMPERIFIQTLIGRVLADDIYIGPRCIATRNQNIGVGLVNKLLNFRAQPISIRTPFTCRSTSWICRLCYGRSPTHGDLVELGEAVGIIAGQSIGEPGTQLTLRTFHTGGVFTGGTAEHVRAPSNGKIRFTEDLVHPTRTRHGYPAFFCSIYLYVTIQSQDILHHVKIPPKSFILVQNDQYVESEQVIAETRAGASTLNYKEKIRKHIYSDSGGEMHWSTNVYHAPEFTYGNVHLLSKTSHLWILLGEPCHSSLVSTSIHRDQDQMSAQSLSVKRRYTSKLSETNDEAKQKIASEDLIADYSDVNPSRCTDHYNLVYPAILPILDENSYFFSNCLSKRRRNQFIIPLQSIQEHKNQLMPCSSISMKIPPNANGIFCANSILAYFDDPRYRRNNSGSTKYGTLEMYSTIKKEDFIQYRGVNEFRLKSKVERFFFIPEEVHILPGSSSIMVRNQSLIGVDTQITLNLRSRVGGLVWVERKKNRIELKIFFGDIYFPGGADNLSRHSGVLIPPGTEIKTNYKESKKVKNWIYVQRITLSKKKFFFLVRPLVTYEIMDGIPLATLFPPDLLQQRENAQLRVVNYILHGNGKPIRGNYDASIQLVRTCLVFKRNQDKKSSYSEAARASVVEIRTNYLIRHFLRIDFVKAPISYIGKRYDPLGLGLLAEDWTHKNPYSKARIHQNLNQNKGTIHTFFNRNKGSQSLIILSSSNCSRMDPANGAKSNNVIQESKKEEYPMLQISNSLGPLGTYPPIANCDSFNRLLTHNQILVTNYFHLDNVKPPFQVFKFKYYFIAENLKICNYNPCSNLRLNAFYLNLNFLHPNSCAETSKIMSLGQFICQNVCIDKTRPPFKSGQVIFIQVDSVVIRLAKPYLATPGATVHGLYGETFFGGDTVVTFNYEKSRSGDITQGLPKVEQVLEVRSVDSISMNLEGRVEGWGKCITGILGIPWGFLIGAELTIVQSRISLVNKIQKVYRFQGVHIHNRHIEIIVRQITSKVLVSEDGMSNVFLPGELIGLLRAERMGRALEEPIHYRSVFLGITKASLNTQSFISEASFQETARVLSKAALGGRIDWLKGLKENVVLGGVIPAGTGFRGLVDPSKQYNKNNIPLKNNLFEGGMTDLLVHHRKLFDSFLNTLIYHHHRIDRFYNDS.

Zn(2+)-binding residues include Cys-220, Cys-291, Cys-298, and Cys-301.

It belongs to the RNA polymerase beta' chain family. RpoC2 subfamily. In terms of assembly, in plastids the minimal PEP RNA polymerase catalytic core is composed of four subunits: alpha, beta, beta', and beta''. When a (nuclear-encoded) sigma factor is associated with the core the holoenzyme is formed, which can initiate transcription. It depends on Zn(2+) as a cofactor.

It is found in the plastid. It catalyses the reaction RNA(n) + a ribonucleoside 5'-triphosphate = RNA(n+1) + diphosphate. Functionally, DNA-dependent RNA polymerase catalyzes the transcription of DNA into RNA using the four ribonucleoside triphosphates as substrates. The protein is DNA-directed RNA polymerase subunit beta'' of Cuscuta reflexa (Southern Asian dodder).